A 479-amino-acid polypeptide reads, in one-letter code: Sulfate adenylyltransferase subunit 1 (479 aa).

The tr-type G domain occupies 25 to 239 (KSLLRFLTCG…EVLETVDIQR (215 aa)). The segment at 34-41 (GSVDDGKS) is G1. Residue 34 to 41 (GSVDDGKS) coordinates GTP. Positions 92 to 96 (GITID) are G2. Positions 113–116 (DTPG) are G3. GTP is bound by residues 113-117 (DTPGH) and 168-171 (NKMD). Positions 168-171 (NKMD) are G4. The segment at 206-208 (SAL) is G5.

This sequence belongs to the TRAFAC class translation factor GTPase superfamily. Classic translation factor GTPase family. CysN/NodQ subfamily. Heterodimer composed of CysD, the smaller subunit, and CysN.

It carries out the reaction sulfate + ATP + H(+) = adenosine 5'-phosphosulfate + diphosphate. It participates in sulfur metabolism; hydrogen sulfide biosynthesis; sulfite from sulfate: step 1/3. Functionally, with CysD forms the ATP sulfurylase (ATPS) that catalyzes the adenylation of sulfate producing adenosine 5'-phosphosulfate (APS) and diphosphate, the first enzymatic step in sulfur assimilation pathway. APS synthesis involves the formation of a high-energy phosphoric-sulfuric acid anhydride bond driven by GTP hydrolysis by CysN coupled to ATP hydrolysis by CysD. The protein is Sulfate adenylyltransferase subunit 1 of Salmonella newport (strain SL254).